Here is a 128-residue protein sequence, read N- to C-terminus: Large ribosomal subunit protein bL19 (128 aa).

The protein belongs to the bacterial ribosomal protein bL19 family.

Functionally, this protein is located at the 30S-50S ribosomal subunit interface and may play a role in the structure and function of the aminoacyl-tRNA binding site. This chain is Large ribosomal subunit protein bL19, found in Paraburkholderia xenovorans (strain LB400).